Reading from the N-terminus, the 708-residue chain is Outer capsid protein mu-1 (708 aa).

Gly-2 carries the N-myristoyl glycine; by host lipid modification. 8 N-linked (GlcNAc...) asparagine; by host glycosylation sites follow: Asn-3, Asn-12, Asn-81, Asn-110, Asn-458, Asn-482, Asn-528, and Asn-659. The segment at 675 to 708 (PKPDCPTSGDSGESSNRRVKRDSYAGVVKRGYTR) is disordered.

The protein belongs to the orthoreovirus mu-1 protein family. Heterohexamer of three sigma-3 and three Mu-1 proteins. In terms of processing, cleaved during the endosomal proteolytic disassembly of the outer capsid. Mu-1 is proteolytically cleaved into mu-1N and mu-1C during the maturation step to generate the ISVP. Cleavage of mu-1 to mu-1C is dependent on myristoylation and binding to sigma-3 protein. Mu-1C is further cleaved into delta (59 kDa), and phi (13 kDa) segments during entry into the host cell cytoplasm. Post-translationally, mu-1 and mu-1N are N-terminally myristoylated. This acylation is essential for the membrane fusion activity.

It localises to the virion. It is found in the host cell membrane. The protein localises to the host endoplasmic reticulum. Its subcellular location is the host mitochondrion. Its function is as follows. Major outer capsid protein involved in host cell membrane penetration. In the endocytic compartment, outer-capsid protein sigma-3 is removed by cathepsin proteases, which exposes the viral membrane-penetration protein mu-1. Both myristoylated peptides mu-1N and phi are released during infectious subvirion particles (ISVP) formation in the endosome. They associate with host membranes and mu-1N induces permeabilization and delivery of transcriptionally active viral particles into the host cell cytoplasm. Seems to induce apoptosis in the host cell. The viral outer shell polypeptides, of which mu-1 is one, impose structural constraints that prevent elongation of nascent transcripts by the RNA-dependent RNA polymerase lambda-3. In Mammalia (T3D), this protein is Outer capsid protein mu-1 (M2).